Here is a 238-residue protein sequence, read N- to C-terminus: uncharacterized protein (238 aa).

The next 5 membrane-spanning stretches (helical) occupy residues 6-26, 45-65, 98-118, 160-180, and 186-206; these read METLIRLFVSILIICVLALMI, FILLYFCGFKYLILLLSFFIL, IPILFAILAIFGFNWALIGYI, IFGTLAGVLGAFLIGLFGYLL, and IVLCGTAGGIAGNLADSLVGA.

Belongs to the TMEM19 family.

Its subcellular location is the cell membrane. This is an uncharacterized protein from Methanocaldococcus jannaschii (strain ATCC 43067 / DSM 2661 / JAL-1 / JCM 10045 / NBRC 100440) (Methanococcus jannaschii).